The following is a 328-amino-acid chain: Ribosomal RNA small subunit methyltransferase H (328 aa).

Residues 37 to 39 (GGH), Asp-57, Phe-83, Asp-104, and Gln-111 each bind S-adenosyl-L-methionine.

It belongs to the methyltransferase superfamily. RsmH family.

The protein localises to the cytoplasm. It catalyses the reaction cytidine(1402) in 16S rRNA + S-adenosyl-L-methionine = N(4)-methylcytidine(1402) in 16S rRNA + S-adenosyl-L-homocysteine + H(+). Its function is as follows. Specifically methylates the N4 position of cytidine in position 1402 (C1402) of 16S rRNA. The chain is Ribosomal RNA small subunit methyltransferase H from Neisseria meningitidis serogroup C / serotype 2a (strain ATCC 700532 / DSM 15464 / FAM18).